A 37-amino-acid chain; its full sequence is Large ribosomal subunit protein bL36 (37 aa).

This sequence belongs to the bacterial ribosomal protein bL36 family.

The chain is Large ribosomal subunit protein bL36 from Magnetococcus marinus (strain ATCC BAA-1437 / JCM 17883 / MC-1).